The following is a 163-amino-acid chain: Neurotrophin-3 (163 aa).

An N-terminal signal peptide occupies residues 1–3 (IQS). Residues 4-119 (TSMDQGILTE…VLNRTSRRKR (116 aa)) constitute a propeptide that is removed on maturation. Residue asparagine 112 is glycosylated (N-linked (GlcNAc...) asparagine). Residues 112–132 (NRTSRRKREGKSHRGEYSVCD) form a disordered region. Positions 123–132 (SHRGEYSVCD) are enriched in basic and acidic residues.

It belongs to the NGF-beta family.

It is found in the secreted. Functionally, seems to promote the survival of visceral and proprioceptive sensory neurons. The sequence is that of Neurotrophin-3 (NTF3) from Exiliboa placata (Oaxacan dwarf boa).